The following is a 403-amino-acid chain: Phosphoglycerate kinase (403 aa).

Substrate-binding positions include 21 to 23 (DFN), Arg36, 59 to 62 (HVGR), Arg119, and Arg154. Residues Lys207, Gly299, Glu330, and 357–360 (GGDA) each bind ATP.

This sequence belongs to the phosphoglycerate kinase family. As to quaternary structure, monomer.

Its subcellular location is the cytoplasm. It carries out the reaction (2R)-3-phosphoglycerate + ATP = (2R)-3-phospho-glyceroyl phosphate + ADP. It functions in the pathway carbohydrate degradation; glycolysis; pyruvate from D-glyceraldehyde 3-phosphate: step 2/5. This chain is Phosphoglycerate kinase (pgk), found in Chlamydia trachomatis serovar D (strain ATCC VR-885 / DSM 19411 / UW-3/Cx).